A 118-amino-acid polypeptide reads, in one-letter code: DNA-directed RNA polymerase subunit omega (118 aa).

Residues 78–104 are disordered; it reads DEPEEDSMAMLMGGGQPDKPAEDDMSE.

This sequence belongs to the RNA polymerase subunit omega family. As to quaternary structure, the RNAP catalytic core consists of 2 alpha, 1 beta, 1 beta' and 1 omega subunit. When a sigma factor is associated with the core the holoenzyme is formed, which can initiate transcription.

It catalyses the reaction RNA(n) + a ribonucleoside 5'-triphosphate = RNA(n+1) + diphosphate. Functionally, promotes RNA polymerase assembly. Latches the N- and C-terminal regions of the beta' subunit thereby facilitating its interaction with the beta and alpha subunits. This chain is DNA-directed RNA polymerase subunit omega, found in Dinoroseobacter shibae (strain DSM 16493 / NCIMB 14021 / DFL 12).